Consider the following 478-residue polypeptide: Protein nucleotidyltransferase YdiU (478 aa).

Gly83, Gly85, Arg86, Lys106, Asp118, Gly119, Arg169, and Arg176 together coordinate ATP. Asp245 acts as the Proton acceptor in catalysis. Residues Asn246 and Asp255 each contribute to the Mg(2+) site. Asp255 contacts ATP.

Belongs to the SELO family. The cofactor is Mg(2+). Requires Mn(2+) as cofactor.

It catalyses the reaction L-seryl-[protein] + ATP = 3-O-(5'-adenylyl)-L-seryl-[protein] + diphosphate. The catalysed reaction is L-threonyl-[protein] + ATP = 3-O-(5'-adenylyl)-L-threonyl-[protein] + diphosphate. The enzyme catalyses L-tyrosyl-[protein] + ATP = O-(5'-adenylyl)-L-tyrosyl-[protein] + diphosphate. It carries out the reaction L-histidyl-[protein] + UTP = N(tele)-(5'-uridylyl)-L-histidyl-[protein] + diphosphate. It catalyses the reaction L-seryl-[protein] + UTP = O-(5'-uridylyl)-L-seryl-[protein] + diphosphate. The catalysed reaction is L-tyrosyl-[protein] + UTP = O-(5'-uridylyl)-L-tyrosyl-[protein] + diphosphate. Its function is as follows. Nucleotidyltransferase involved in the post-translational modification of proteins. It can catalyze the addition of adenosine monophosphate (AMP) or uridine monophosphate (UMP) to a protein, resulting in modifications known as AMPylation and UMPylation. The protein is Protein nucleotidyltransferase YdiU of Exiguobacterium sp. (strain ATCC BAA-1283 / AT1b).